The primary structure comprises 90 residues: U7-theraphotoxin-Hhn1h (90 aa).

The signal sequence occupies residues methionine 1–serine 19. A propeptide spanning residues phenylalanine 20–glutamate 50 is cleaved from the precursor. Cystine bridges form between cysteine 51/cysteine 65, cysteine 58/cysteine 70, and cysteine 64/cysteine 81.

It belongs to the neurotoxin 10 (Hwtx-1) family. 13 (Hntx-13) subfamily. As to expression, expressed by the venom gland.

It is found in the secreted. Its function is as follows. Ion channel inhibitor. The polypeptide is U7-theraphotoxin-Hhn1h (Cyriopagopus hainanus (Chinese bird spider)).